A 1055-amino-acid polypeptide reads, in one-letter code: DNA-directed RNA polymerase subunit beta' (1055 aa).

The Zn(2+) site is built by C60, C62, C75, and C78. Residues D449, D451, and D453 each coordinate Mg(2+). Residues C818, C892, C899, and C902 each coordinate Zn(2+).

It belongs to the RNA polymerase beta' chain family. The RNAP catalytic core consists of 2 alpha, 1 beta, 1 beta' and 1 omega subunit. When a sigma factor is associated with the core the holoenzyme is formed, which can initiate transcription. Requires Mg(2+) as cofactor. Zn(2+) is required as a cofactor.

The enzyme catalyses RNA(n) + a ribonucleoside 5'-triphosphate = RNA(n+1) + diphosphate. Functionally, DNA-dependent RNA polymerase catalyzes the transcription of DNA into RNA using the four ribonucleoside triphosphates as substrates. The protein is DNA-directed RNA polymerase subunit beta' of Pediococcus acidilactici.